Reading from the N-terminus, the 591-residue chain is L-fucose isomerase (591 aa).

Catalysis depends on proton acceptor residues glutamate 337 and aspartate 361. Residues glutamate 337, aspartate 361, and histidine 528 each contribute to the Mn(2+) site.

It belongs to the L-fucose isomerase family. Homohexamer. It depends on Mn(2+) as a cofactor.

Its subcellular location is the cytoplasm. It catalyses the reaction L-fucose = L-fuculose. The enzyme catalyses D-arabinose = D-ribulose. The catalysed reaction is L-xylopyranose = L-xylulose. It functions in the pathway carbohydrate degradation; L-fucose degradation; L-lactaldehyde and glycerone phosphate from L-fucose: step 1/3. With respect to regulation, inhibited by ribitol, L-arabitol and dulcitol. Isomerization of L-xylulose to L-xylose is inhibited by xylitol. Functionally, converts the aldose L-fucose into the corresponding ketose L-fuculose. Also converts D-arabinose into D-ribulose. In addition, catalyzes the isomerization of L-xylulose to L-xylose. The protein is L-fucose isomerase of Escherichia coli (strain K12).